The chain runs to 150 residues: Histone H2A.1 (150 aa).

Met1 is modified (N-acetylmethionine). 2 stretches are compositionally biased toward basic residues: residues 1–24 (MDAS…KKSV) and 141–150 (SKAKKSPKKA). Disordered regions lie at residues 1–26 (MDAS…SVTR) and 128–150 (RKEN…PKKA). 2 short sequence motifs (SPKK motif) span residues 139–142 (SPSK) and 146–149 (SPKK).

It belongs to the histone H2A family. In terms of assembly, the nucleosome is a histone octamer containing two molecules each of H2A, H2B, H3 and H4 assembled in one H3-H4 heterotetramer and two H2A-H2B heterodimers. The octamer wraps approximately 147 bp of DNA. High expression in root meristematic tissues, moderate in whole shoot and very low in mature leaves.

It localises to the nucleus. Its subcellular location is the chromosome. In terms of biological role, core component of nucleosome. Nucleosomes wrap and compact DNA into chromatin, limiting DNA accessibility to the cellular machineries which require DNA as a template. Histones thereby play a central role in transcription regulation, DNA repair, DNA replication and chromosomal stability. DNA accessibility is regulated via a complex set of post-translational modifications of histones, also called histone code, and nucleosome remodeling. The protein is Histone H2A.1 of Pisum sativum (Garden pea).